A 79-amino-acid chain; its full sequence is MAGTGVVAVYGEGAMTETKQKSPFSVKVGLAQMLRGGVIMDVVNAEQARIAEEAGACAVMALERVPADIRAQGGVARFC.

Belongs to the PdxS/SNZ family.

The polypeptide is Pyridoxal 5'-phosphate synthase PDX1-like 4 (PDX1L4) (Arabidopsis thaliana (Mouse-ear cress)).